We begin with the raw amino-acid sequence, 123 residues long: Small ribosomal subunit protein uS11 (123 aa).

This sequence belongs to the universal ribosomal protein uS11 family. Part of the 30S ribosomal subunit. Interacts with proteins S7 and S18. Binds to IF-3.

Located on the platform of the 30S subunit, it bridges several disparate RNA helices of the 16S rRNA. Forms part of the Shine-Dalgarno cleft in the 70S ribosome. The sequence is that of Small ribosomal subunit protein uS11 from Coxiella burnetii (strain CbuK_Q154) (Coxiella burnetii (strain Q154)).